The chain runs to 505 residues: Neuronal acetylcholine receptor subunit alpha-3 (505 aa).

Positions 1 to 31 (MGSGPLSLPLALSPPRLLLLLLLSLLPVARA) are cleaved as a signal peptide. The Extracellular segment spans residues 32 to 250 (SEAEHRLFER…PLFYTINLII (219 aa)). Residues N55 and N172 are each glycosylated (N-linked (GlcNAc...) asparagine). 2 disulfides stabilise this stretch: C159-C173 and C223-C224. Residues 251–266 (PCLLISFLTVLVFYLP) form a helical membrane-spanning segment. At 267–268 (SD) the chain is on the cytoplasmic side. Residues 269-285 (CGEKVTLCISVLLSLTV) traverse the membrane as a helical segment. Topologically, residues 286–307 (FLLVITETIPSTSLVIPLIGEY) are extracellular. A helical membrane pass occupies residues 308–326 (LLFTMIFVTLSIVITVFVL). Topologically, residues 327 to 474 (NVHYRTPTTH…QDDWKYVAMV (148 aa)) are cytoplasmic. Phosphoserine is present on residues S413 and S416. A helical membrane pass occupies residues 475-493 (IDRIFLWVFTLVCILGTAG). Topologically, residues 494–505 (LFLQPLMAREDA) are extracellular.

This sequence belongs to the ligand-gated ion channel (TC 1.A.9) family. Acetylcholine receptor (TC 1.A.9.1) subfamily. Alpha-3/CHRNA3 sub-subfamily. Neuronal AChR is composed of two different types of subunits: alpha and beta. CHRNA3/Alpha-3 subunit can be combined to CHRNA5/alpha-5, CHRNB2/beta-2 CHRNB3/beta-3 or CHRNB4/beta-4 to give rise to functional receptors. Forms stoichiometries such as (CHRNA3)2:(CHRNB4)3 or (CHRNA3:CHRNB4)2:CHRNB3. Part of a complex composed of STUB1/CHIP, VCP/p97, CHRNA3, and UBXN2A that modulates the ubiquitination and endoplasmic reticulum-associated degradation (ERAD) of CHRNA3. Within the complex UBXN2A acts as a scaffold protein required for the interaction of CHRNA3 with VCP/p97, this interaction also inhibits CHRNA3 ubiquitination by STUB1/CHIP and subsequently ERAD. Interacts with UBXN2A (via SEP domain), the interaction is required for the interaction of CHRNA3 in the STUB1:VCP:UBXN2A complex. Interacts with RIC3; which is required for proper folding and assembly. Interacts with LYPD6. Post-translationally, ubiquitinated; by STUB1/CHIP and thereafter degraded by the 26S proteosome complex.

It localises to the synaptic cell membrane. The protein localises to the cell membrane. The protein resides in the endoplasmic reticulum. Its subcellular location is the golgi apparatus. The catalysed reaction is Ca(2+)(in) = Ca(2+)(out). It carries out the reaction K(+)(in) = K(+)(out). It catalyses the reaction Na(+)(in) = Na(+)(out). Activated by a myriad of ligands such as acetylcholine, cytisine, nicotine, choline and epibatidine. The heteropentamer CHRNA3:CHRNB2 activity is blocked by alpha-conotoxins ImI, ImII, PnIA, GID and MII. The heteropentamer CHRNA3:CHRNB4 activity is blocked by the alpha-conotoxin ImI and AuIB. Functionally, component of neuronal acetylcholine receptors (nAChRs) that function as pentameric, ligand-gated cation channels with high calcium permeability among other activities. nAChRs are excitatory neurotrasnmitter receptors formed by a collection of nAChR subunits known to mediate synaptic transmission in the nervous system and the neuromuscular junction. Each nAchR subunit confers differential attributes to channel properties, including activation, deactivation and desensitization kinetics, pH sensitivity, cation permeability, and binding to allosteric modulators. CHRNA3 forms heteropentameric neuronal acetylcholine receptors with CHRNB2 and CHRNB4, with CHRNA5, and CHRNB3 as accesory subunits. CHRNA3:CHRNB4 being predominant in neurons of the autonomic ganglia, it is known as ganglionic nicotinic receptor. CHRNA3:CHRNB4 or CHRNA3:CHRNA5:CHRNB4 play also an important role in the habenulo-interpeduncular tract, modulating the mesolimbic dopamine system and affecting reward circuits and addiction. Hypothalamic CHRNA3:CHRNB4 nAChR activation by nicotine leads to activation of POMC neurons and a decrease in food intake. Also expressed in the urothelium where it modulates reflex bladder activity by increasing intracellular calcium through extracellular influx and basal ATP release. The sequence is that of Neuronal acetylcholine receptor subunit alpha-3 from Homo sapiens (Human).